The primary structure comprises 122 residues: Large ribosomal subunit protein uL14c (122 aa).

Belongs to the universal ribosomal protein uL14 family. Part of the 50S ribosomal subunit.

It localises to the plastid. It is found in the chloroplast. Its function is as follows. Binds to 23S rRNA. The polypeptide is Large ribosomal subunit protein uL14c (Citrus sinensis (Sweet orange)).